A 2727-amino-acid chain; its full sequence is E3 ubiquitin-protein ligase Ufd4 (2727 aa).

2 disordered regions span residues Thr247–Asp271 and Arg365–Thr389. Over residues Arg365–Gln374 the composition is skewed to polar residues. 3 ANK repeats span residues Val422–Lys451, Gln453–Leu482, and Asp486–Pro518. The interval Ala682–Glu702 is disordered. One can recognise an MIB/HERC2 domain in the interval Gln1322 to Glu1392. Polar residues-rich tracts occupy residues Gln1401 to Ser1430 and Lys1437 to Thr1448. Disordered regions lie at residues Gln1401–Thr1448, Asn1483–Pro1512, Glu1570–Asp1592, Tyr1845–Ala1871, Ala1905–Glu1930, and Ser2092–Leu2115. Residues Ser1575–Asp1592 are compositionally biased toward low complexity. A compositionally biased stretch (acidic residues) spans Asp1909–Glu1930. The segment covering Pro2104–Leu2115 has biased composition (polar residues). The region spanning Arg2289–Asn2727 is the HECT domain. Residue Cys2696 is the Glycyl thioester intermediate of the active site.

This sequence belongs to the UPL family. K-HECT subfamily.

It carries out the reaction S-ubiquitinyl-[E2 ubiquitin-conjugating enzyme]-L-cysteine + [acceptor protein]-L-lysine = [E2 ubiquitin-conjugating enzyme]-L-cysteine + N(6)-ubiquitinyl-[acceptor protein]-L-lysine.. It functions in the pathway protein modification; protein ubiquitination. E3 ubiquitin-protein ligase which accepts ubiquitin from an E2 ubiquitin-conjugating enzyme in the form of a thioester and then directly transfers the ubiquitin to targeted substrates. Involved in the negative regulation of the Ras/MAPK signaling pathway in the wing by acting with the E2 enzyme Unc6 and the putative E3 ligases poe and Kcmf1 to mediate the ubiquitination and proteasomal degradation of rl/MAPK. The protein is E3 ubiquitin-protein ligase Ufd4 of Drosophila melanogaster (Fruit fly).